A 242-amino-acid chain; its full sequence is MGNKIHPTGLRLGITQEHRSRWYATSKMYPILLQEDDRIRRFIHKKYGAAGISDVLIARKADQLEVELKTARPGVLVGRQGSGIEELRTGIQKTIGDHSRQVRINVVEVERVDADAFLLAEYIAQQLEKRVAFRRTIRMAVQRAQRAGVLGLKIQVGGRLNGAEIARNEWTREGRVPLHTLRAEIDYATKVASTTYGVLGIKVWIFKGEVLGDEAQSMPVGASPRRRGNRRPQQFEDRSNEG.

One can recognise a KH type-2 domain in the interval 39 to 110 (IRRFIHKKYG…QVRINVVEVE (72 aa)). Residues 216-242 (QSMPVGASPRRRGNRRPQQFEDRSNEG) are disordered. A compositionally biased stretch (basic and acidic residues) spans 233-242 (QQFEDRSNEG).

It belongs to the universal ribosomal protein uS3 family. In terms of assembly, part of the 30S ribosomal subunit. Forms a tight complex with proteins S10 and S14.

In terms of biological role, binds the lower part of the 30S subunit head. Binds mRNA in the 70S ribosome, positioning it for translation. This Prochlorococcus marinus (strain MIT 9303) protein is Small ribosomal subunit protein uS3.